Here is a 346-residue protein sequence, read N- to C-terminus: Probable dual-specificity RNA methyltransferase RlmN (346 aa).

Glu91 acts as the Proton acceptor in catalysis. The 229-residue stretch at 97-325 (TEKRLTVCVS…VSVRYSKGLE (229 aa)) folds into the Radical SAM core domain. A disulfide bridge connects residues Cys104 and Cys330. [4Fe-4S] cluster contacts are provided by Cys111, Cys115, and Cys118. S-adenosyl-L-methionine contacts are provided by residues 158 to 159 (GE), Ser188, 211 to 213 (SLH), and Asn287. Catalysis depends on Cys330, which acts as the S-methylcysteine intermediate.

The protein belongs to the radical SAM superfamily. RlmN family. Requires [4Fe-4S] cluster as cofactor.

It localises to the cytoplasm. It catalyses the reaction adenosine(2503) in 23S rRNA + 2 reduced [2Fe-2S]-[ferredoxin] + 2 S-adenosyl-L-methionine = 2-methyladenosine(2503) in 23S rRNA + 5'-deoxyadenosine + L-methionine + 2 oxidized [2Fe-2S]-[ferredoxin] + S-adenosyl-L-homocysteine. The enzyme catalyses adenosine(37) in tRNA + 2 reduced [2Fe-2S]-[ferredoxin] + 2 S-adenosyl-L-methionine = 2-methyladenosine(37) in tRNA + 5'-deoxyadenosine + L-methionine + 2 oxidized [2Fe-2S]-[ferredoxin] + S-adenosyl-L-homocysteine. Its function is as follows. Specifically methylates position 2 of adenine 2503 in 23S rRNA and position 2 of adenine 37 in tRNAs. The chain is Probable dual-specificity RNA methyltransferase RlmN from Picosynechococcus sp. (strain ATCC 27264 / PCC 7002 / PR-6) (Agmenellum quadruplicatum).